The chain runs to 223 residues: Cytidylate kinase (223 aa).

12–20 (GPSGVGKGT) provides a ligand contact to ATP.

The protein belongs to the cytidylate kinase family. Type 1 subfamily.

It is found in the cytoplasm. The enzyme catalyses CMP + ATP = CDP + ADP. It catalyses the reaction dCMP + ATP = dCDP + ADP. The sequence is that of Cytidylate kinase from Xylella fastidiosa (strain 9a5c).